The following is a 259-amino-acid chain: Putative zinc metalloprotease Rip2 (259 aa).

Transmembrane regions (helical) follow at residues 14 to 34 (PIFL…WLAG) and 39 to 59 (PLAY…SLCL). His60 is a Zn(2+) binding site. The active site involves Glu61. Zn(2+) is bound at residue His64. 4 helical membrane passes run 97 to 117 (GLPM…AVYV), 128 to 148 (TLVS…LLAA), 156 to 176 (IHAV…TALV), and 211 to 231 (LVFL…FGVV).

It belongs to the peptidase M50B family. It depends on Zn(2+) as a cofactor.

The protein resides in the cell membrane. The sequence is that of Putative zinc metalloprotease Rip2 (rip2) from Mycobacterium tuberculosis (strain ATCC 25618 / H37Rv).